A 922-amino-acid chain; its full sequence is Translation initiation factor IF-2 (922 aa).

The interval 33-310 (KTASSTVQPP…SKRQKRNEYE (278 aa)) is disordered. Over residues 75-87 (PAAKAAPKAAAKP) the composition is skewed to low complexity. Composition is skewed to pro residues over residues 88-98 (GPKPGPKPGPQ) and 140-150 (TPKPGAKPGPK). Composition is skewed to low complexity over residues 151 to 169 (PGGAKPGAKPGPKPGGRAP) and 202 to 211 (PGSRPGGAKK). Gly residues-rich tracts occupy residues 215-225 (KPGGAKQGGGR) and 248-292 (FGGG…GRPG). Over residues 296-305 (RKGRKSKRQK) the composition is skewed to basic residues. In terms of domain architecture, tr-type G spans 418-590 (QRPPVVTVMG…VLLTADASLD (173 aa)). The tract at residues 427 to 434 (GHVDHGKT) is G1. GTP is bound at residue 427–434 (GHVDHGKT). The segment at 452-456 (GITQH) is G2. Positions 477–480 (DTPG) are G3. Residues 477–481 (DTPGH) and 531–534 (NKID) each bind GTP. The interval 531 to 534 (NKID) is G4. The segment at 567-569 (SAK) is G5.

This sequence belongs to the TRAFAC class translation factor GTPase superfamily. Classic translation factor GTPase family. IF-2 subfamily.

Its subcellular location is the cytoplasm. Its function is as follows. One of the essential components for the initiation of protein synthesis. Protects formylmethionyl-tRNA from spontaneous hydrolysis and promotes its binding to the 30S ribosomal subunits. Also involved in the hydrolysis of GTP during the formation of the 70S ribosomal complex. The polypeptide is Translation initiation factor IF-2 (Corynebacterium jeikeium (strain K411)).